Consider the following 576-residue polypeptide: V-type ATP synthase alpha chain (576 aa).

Position 238–245 (238–245) interacts with ATP; that stretch reads GPFGAGKT.

It belongs to the ATPase alpha/beta chains family.

It catalyses the reaction ATP + H2O + 4 H(+)(in) = ADP + phosphate + 5 H(+)(out). In terms of biological role, produces ATP from ADP in the presence of a proton gradient across the membrane. The V-type alpha chain is a catalytic subunit. The protein is V-type ATP synthase alpha chain of Borrelia turicatae (strain 91E135).